A 344-amino-acid polypeptide reads, in one-letter code: Holliday junction branch migration complex subunit RuvB (344 aa).

Positions 1–182 (MSDRLISATA…FGIISRLEFY (182 aa)) are large ATPase domain (RuvB-L). ATP contacts are provided by residues Leu-21, Arg-22, Gly-63, Lys-66, Thr-67, Thr-68, 129–131 (EDF), Arg-172, Tyr-182, and Arg-219. Residue Thr-67 coordinates Mg(2+). Positions 183–253 (NNEDLTRIVT…VAAEALEFFE (71 aa)) are small ATPAse domain (RuvB-S). Positions 256–344 (PLGLDHTDRR…QKGLEQNSLF (89 aa)) are head domain (RuvB-H). The DNA site is built by Arg-311 and Arg-316.

This sequence belongs to the RuvB family. Homohexamer. Forms an RuvA(8)-RuvB(12)-Holliday junction (HJ) complex. HJ DNA is sandwiched between 2 RuvA tetramers; dsDNA enters through RuvA and exits via RuvB. An RuvB hexamer assembles on each DNA strand where it exits the tetramer. Each RuvB hexamer is contacted by two RuvA subunits (via domain III) on 2 adjacent RuvB subunits; this complex drives branch migration. In the full resolvosome a probable DNA-RuvA(4)-RuvB(12)-RuvC(2) complex forms which resolves the HJ.

Its subcellular location is the cytoplasm. The catalysed reaction is ATP + H2O = ADP + phosphate + H(+). Functionally, the RuvA-RuvB-RuvC complex processes Holliday junction (HJ) DNA during genetic recombination and DNA repair, while the RuvA-RuvB complex plays an important role in the rescue of blocked DNA replication forks via replication fork reversal (RFR). RuvA specifically binds to HJ cruciform DNA, conferring on it an open structure. The RuvB hexamer acts as an ATP-dependent pump, pulling dsDNA into and through the RuvAB complex. RuvB forms 2 homohexamers on either side of HJ DNA bound by 1 or 2 RuvA tetramers; 4 subunits per hexamer contact DNA at a time. Coordinated motions by a converter formed by DNA-disengaged RuvB subunits stimulates ATP hydrolysis and nucleotide exchange. Immobilization of the converter enables RuvB to convert the ATP-contained energy into a lever motion, pulling 2 nucleotides of DNA out of the RuvA tetramer per ATP hydrolyzed, thus driving DNA branch migration. The RuvB motors rotate together with the DNA substrate, which together with the progressing nucleotide cycle form the mechanistic basis for DNA recombination by continuous HJ branch migration. Branch migration allows RuvC to scan DNA until it finds its consensus sequence, where it cleaves and resolves cruciform DNA. The chain is Holliday junction branch migration complex subunit RuvB from Desulforamulus reducens (strain ATCC BAA-1160 / DSM 100696 / MI-1) (Desulfotomaculum reducens).